Consider the following 141-residue polypeptide: MAKKVVGEIKLQIAATKANPSPPVGPALGQQGVNIMEFCKAFNERTKDMAGFNIPVVITVYADKSFTFITKQPPATDLIKKAAGISKGADNPLKNKVGKLTKAQVLEIVDKKIADMNTKDREQAAKIIMGSARSMGVEIVD.

This sequence belongs to the universal ribosomal protein uL11 family. Part of the ribosomal stalk of the 50S ribosomal subunit. Interacts with L10 and the large rRNA to form the base of the stalk. L10 forms an elongated spine to which L12 dimers bind in a sequential fashion forming a multimeric L10(L12)X complex. One or more lysine residues are methylated.

Its function is as follows. Forms part of the ribosomal stalk which helps the ribosome interact with GTP-bound translation factors. The chain is Large ribosomal subunit protein uL11 from Campylobacter lari (strain RM2100 / D67 / ATCC BAA-1060).